A 541-amino-acid chain; its full sequence is Protein wntless homolog (541 aa).

Positions 1-42 are cleaved as a signal peptide; that stretch reads MAGAIIENMSTRKLCIVGGILLVFQVIAFLVGGLIAPSPTTA. Topologically, residues 43–232 are lumenal; sequence VPYMSVKCID…GIHQNGGFTK (190 aa). Residues 233-253 traverse the membrane as a helical segment; that stretch reads VWFAMKTFLTPSILIIMVWYW. Residues 254–268 lie on the Cytoplasmic side of the membrane; that stretch reads RRITLMTRAPVLLEK. A helical membrane pass occupies residues 269 to 289; that stretch reads VIFALGISMTFINIPVEWFSI. Residues 290 to 303 are Lumenal-facing; sequence GFDWTWMLLFGDIR. Residues 304-324 form a helical membrane-spanning segment; that stretch reads QGIFYAMLLSFWIIFCGEHMM. At 325–331 the chain is on the cytoplasmic side; sequence DQNERNR. Residues 332–352 form a helical membrane-spanning segment; the sequence is LSGYWKQVGPIAVGSFCLFIF. Over 353–380 the chain is Lumenal; sequence DMCERGVQLKNPFYSIWTTEVGTELAMA. A helical transmembrane segment spans residues 381 to 401; sequence FIIVAGICLCLYFLFLCFMVF. The Cytoplasmic portion of the chain corresponds to 402-431; it reads QVFRNISGKQSSLPAMSKARRLHYEGLIFR. The helical transmembrane segment at 432 to 452 threads the bilayer; the sequence is FKFLMLITLACAAMTVIFFIV. At 453–471 the chain is on the lumenal side; the sequence is SQVTEGHWKWGDITIQVNS. The helical transmembrane segment at 472-492 threads the bilayer; that stretch reads AFFTGIYGMWNLYVFALMFLY. Residues 493 to 541 are Cytoplasmic-facing; the sequence is APSHKNYGEDQSNGDLGVSSGEELQLTTTITHVDGPTEVYKLARKEAQE.

It belongs to the wntless family.

The protein resides in the golgi apparatus membrane. It is found in the cytoplasmic vesicle membrane. Functionally, may play an essential role in Wnt signaling pathway. May be required for Wnt-dependent patterning processes. The sequence is that of Protein wntless homolog (WLS) from Gallus gallus (Chicken).